We begin with the raw amino-acid sequence, 367 residues long: Quinolinate synthase (367 aa).

Histidine 45 and serine 62 together coordinate iminosuccinate. Cysteine 109 is a [4Fe-4S] cluster binding site. Residues 140–142 and serine 161 each bind iminosuccinate; that span reads YVN. [4Fe-4S] cluster is bound at residue cysteine 229. Residues 255 to 257 and threonine 272 contribute to the iminosuccinate site; that span reads HPE. Residue cysteine 319 participates in [4Fe-4S] cluster binding.

It belongs to the quinolinate synthase family. Type 3 subfamily. [4Fe-4S] cluster serves as cofactor.

It localises to the cytoplasm. The catalysed reaction is iminosuccinate + dihydroxyacetone phosphate = quinolinate + phosphate + 2 H2O + H(+). It participates in cofactor biosynthesis; NAD(+) biosynthesis; quinolinate from iminoaspartate: step 1/1. Catalyzes the condensation of iminoaspartate with dihydroxyacetone phosphate to form quinolinate. The protein is Quinolinate synthase of Anoxybacillus flavithermus (strain DSM 21510 / WK1).